The chain runs to 235 residues: Purine nucleoside phosphorylase DeoD-type (235 aa).

Residue histidine 4 coordinates a purine D-ribonucleoside. Residues glycine 20, arginine 24, arginine 43, and 87 to 90 (RVGT) each bind phosphate. Residues 179 to 181 (EME) and 203 to 204 (SD) each bind a purine D-ribonucleoside. The active-site Proton donor is aspartate 204.

This sequence belongs to the PNP/UDP phosphorylase family. Homohexamer; trimer of homodimers.

The enzyme catalyses a purine D-ribonucleoside + phosphate = a purine nucleobase + alpha-D-ribose 1-phosphate. The catalysed reaction is a purine 2'-deoxy-D-ribonucleoside + phosphate = a purine nucleobase + 2-deoxy-alpha-D-ribose 1-phosphate. In terms of biological role, catalyzes the reversible phosphorolytic breakdown of the N-glycosidic bond in the beta-(deoxy)ribonucleoside molecules, with the formation of the corresponding free purine bases and pentose-1-phosphate. In Brevibacillus brevis (strain 47 / JCM 6285 / NBRC 100599), this protein is Purine nucleoside phosphorylase DeoD-type.